The primary structure comprises 1364 residues: DNA-directed RNA polymerase subunit beta (1364 aa).

Belongs to the RNA polymerase beta chain family. In terms of assembly, the RNAP catalytic core consists of 2 alpha, 1 beta, 1 beta' and 1 omega subunit. When a sigma factor is associated with the core the holoenzyme is formed, which can initiate transcription.

It catalyses the reaction RNA(n) + a ribonucleoside 5'-triphosphate = RNA(n+1) + diphosphate. In terms of biological role, DNA-dependent RNA polymerase catalyzes the transcription of DNA into RNA using the four ribonucleoside triphosphates as substrates. The protein is DNA-directed RNA polymerase subunit beta of Desulfatibacillum aliphaticivorans.